The chain runs to 511 residues: Bifunctional purine biosynthesis protein PurH (511 aa).

Residues 1–145 (MKKRALVSVS…KNHKFVSVIV (145 aa)) form the MGS-like domain.

It belongs to the PurH family.

The enzyme catalyses (6R)-10-formyltetrahydrofolate + 5-amino-1-(5-phospho-beta-D-ribosyl)imidazole-4-carboxamide = 5-formamido-1-(5-phospho-D-ribosyl)imidazole-4-carboxamide + (6S)-5,6,7,8-tetrahydrofolate. It carries out the reaction IMP + H2O = 5-formamido-1-(5-phospho-D-ribosyl)imidazole-4-carboxamide. It functions in the pathway purine metabolism; IMP biosynthesis via de novo pathway; 5-formamido-1-(5-phospho-D-ribosyl)imidazole-4-carboxamide from 5-amino-1-(5-phospho-D-ribosyl)imidazole-4-carboxamide (10-formyl THF route): step 1/1. Its pathway is purine metabolism; IMP biosynthesis via de novo pathway; IMP from 5-formamido-1-(5-phospho-D-ribosyl)imidazole-4-carboxamide: step 1/1. The chain is Bifunctional purine biosynthesis protein PurH from Bacillus mycoides (strain KBAB4) (Bacillus weihenstephanensis).